The primary structure comprises 414 residues: eIF5-mimic protein 1 (414 aa).

Positions 1 to 22 (MNKNQKPVLTGQRFKTRKRDEK) are disordered. The W2 domain maps to 248–414 (VQQSLGTRKE…LQNAEEEFRI (167 aa)).

The protein belongs to the BZW family.

The protein resides in the cytoplasm. In terms of biological role, translation initiation regulator which may repress non-AUG initiated translation and repeat-associated non-AUG (RAN) initiated translation by acting as a competitive inhibitor of eukaryotic translation initiation factor 5 (EIF5) function. The protein is eIF5-mimic protein 1 (BZW2) of Gallus gallus (Chicken).